The chain runs to 110 residues: MKFVLLFGVLLVTLFSYSSAEMLDDFDQADEDELLSLIEKEEARKDCIPKHYECTSNKHGCCRGHLFKYKCQCTTVVTQSGEETERCFCGTPPHHKAAELVVGFGKKIFG.

An N-terminal signal peptide occupies residues 1–20 (MKFVLLFGVLLVTLFSYSSA). A propeptide spanning residues 21–44 (EMLDDFDQADEDELLSLIEKEEAR) is cleaved from the precursor. Cystine bridges form between C47-C62, C54-C71, C61-C89, and C73-C87.

Belongs to the neurotoxin 19 (CSTX) family. 03 subfamily. As to expression, expressed by the venom gland.

The protein localises to the secreted. This is U1-lycotoxin-Ls1hh from Lycosa singoriensis (Wolf spider).